Reading from the N-terminus, the 168-residue chain is Plastocyanin, chloroplastic (168 aa).

The 99-residue stretch at 70-168 folds into the Plastocyanin-like domain; that stretch reads VEVLLGGGDG…AGMVGKVTVN (99 aa). The Cu cation site is built by His106, Cys153, His156, and Met161.

The protein belongs to the plastocyanin family. It depends on Cu(2+) as a cofactor.

The protein resides in the plastid. It is found in the chloroplast thylakoid membrane. Its function is as follows. Participates in electron transfer between P700 and the cytochrome b6-f complex in photosystem I. This chain is Plastocyanin, chloroplastic (PETE), found in Spinacia oleracea (Spinach).